Here is a 403-residue protein sequence, read N- to C-terminus: DNA replication and repair protein RecF (403 aa).

30–37 contributes to the ATP binding site; it reads GSNGLGKT.

The protein belongs to the RecF family.

It is found in the cytoplasm. Its function is as follows. The RecF protein is involved in DNA metabolism; it is required for DNA replication and normal SOS inducibility. RecF binds preferentially to single-stranded, linear DNA. It also seems to bind ATP. This Bifidobacterium adolescentis (strain ATCC 15703 / DSM 20083 / NCTC 11814 / E194a) protein is DNA replication and repair protein RecF.